The primary structure comprises 156 residues: Ribosome-binding factor A (156 aa).

Residues A129 to R156 are disordered.

It belongs to the RbfA family. In terms of assembly, monomer. Binds 30S ribosomal subunits, but not 50S ribosomal subunits or 70S ribosomes.

Its subcellular location is the cytoplasm. One of several proteins that assist in the late maturation steps of the functional core of the 30S ribosomal subunit. Associates with free 30S ribosomal subunits (but not with 30S subunits that are part of 70S ribosomes or polysomes). Required for efficient processing of 16S rRNA. May interact with the 5'-terminal helix region of 16S rRNA. This chain is Ribosome-binding factor A, found in Salinispora arenicola (strain CNS-205).